A 236-amino-acid chain; its full sequence is Uridylate kinase (236 aa).

9–12 (KISG) is a binding site for ATP. Position 51 (Gly-51) interacts with UMP. ATP contacts are provided by Gly-52 and Arg-56. UMP is bound by residues Asp-71 and 132-139 (TGNSHFTT). Residues Tyr-166 and Asp-169 each contribute to the ATP site.

It belongs to the UMP kinase family. Homohexamer.

Its subcellular location is the cytoplasm. The catalysed reaction is UMP + ATP = UDP + ADP. It participates in pyrimidine metabolism; CTP biosynthesis via de novo pathway; UDP from UMP (UMPK route): step 1/1. With respect to regulation, inhibited by UTP. Its function is as follows. Catalyzes the reversible phosphorylation of UMP to UDP. The chain is Uridylate kinase from Mycoplasmoides gallisepticum (strain R(low / passage 15 / clone 2)) (Mycoplasma gallisepticum).